Here is a 395-residue protein sequence, read N- to C-terminus: Cystathionine beta-lyase (395 aa).

An N6-(pyridoxal phosphate)lysine modification is found at lysine 210.

It belongs to the trans-sulfuration enzymes family. In terms of assembly, homotetramer. The cofactor is pyridoxal 5'-phosphate.

The protein resides in the cytoplasm. The catalysed reaction is L,L-cystathionine + H2O = L-homocysteine + pyruvate + NH4(+). It catalyses the reaction an S-substituted L-cysteine + H2O = a thiol + pyruvate + NH4(+). It participates in amino-acid biosynthesis; L-methionine biosynthesis via de novo pathway; L-homocysteine from L-cystathionine: step 1/1. Its function is as follows. Catalyzes the cleavage of cystathionine to homocysteine, pyruvate and ammonia during methionine biosynthesis. This Salmonella typhimurium (strain LT2 / SGSC1412 / ATCC 700720) protein is Cystathionine beta-lyase (metC).